The primary structure comprises 96 residues: Co-chaperonin GroES (96 aa).

Belongs to the GroES chaperonin family. In terms of assembly, heptamer of 7 subunits arranged in a ring. Interacts with the chaperonin GroEL.

It localises to the cytoplasm. Together with the chaperonin GroEL, plays an essential role in assisting protein folding. The GroEL-GroES system forms a nano-cage that allows encapsulation of the non-native substrate proteins and provides a physical environment optimized to promote and accelerate protein folding. GroES binds to the apical surface of the GroEL ring, thereby capping the opening of the GroEL channel. This chain is Co-chaperonin GroES, found in Hahella chejuensis (strain KCTC 2396).